Consider the following 504-residue polypeptide: MELLNGTGLWPMAIFTVIFILLVDLMHRHQRWTSRYPPGPVPWPVLGNLLQVDPSNMPYSMYKLQHRYGDVFSLQMGWKPMVIVNRLKAVQEVLVTHGEDTADRPPVPIFKCLGVKPRSQGVVFASYGPEWREQRRFSVSTLRTFGMGKKSLEEWVTKEAGHLCDAFTAQNGRSINPKAMLNKALCNVIASLIFARRFEYEDPYLIRMLTLVEESLIEVSGFIPEVLNTFPALLRIPGLADKVFQGQKTFMAFLDNLLAENRTTWDPAQPPRNLTDAFLAEVEKAKGNPESSFNDENLRMVVVDLFTAGMVTTATTLTWALLLMILYPDVQRRVQQEIDEVIGQVRCPEMTDQAHMPYTNAVIHEVQRFGDIAPLNLPRITSCDIEVQDFVIPKGTTLIINLSSVLKDETVWEKPLRFHPEHFLDAQGNFVKHEAFMPFSAGRRACLGEPLARMELFLFFTCLLQHFSFSVPAGQPRPSTLGNFAISVAPLPYQLCAAVREQGH.

Residue Ser-382 is glycosylated (O-linked (GlcNAc) serine). Cys-446 provides a ligand contact to heme.

Belongs to the cytochrome P450 family. The cofactor is heme.

It localises to the endoplasmic reticulum membrane. Its subcellular location is the microsome membrane. The enzyme catalyses an organic molecule + reduced [NADPH--hemoprotein reductase] + O2 = an alcohol + oxidized [NADPH--hemoprotein reductase] + H2O + H(+). Functionally, cytochromes P450 are a group of heme-thiolate monooxygenases. In liver microsomes, this enzyme is involved in an NADPH-dependent electron transport pathway. It oxidizes a variety of structurally unrelated compounds, including steroids, fatty acids, and xenobiotics. The chain is Cytochrome P450 2D10 (Cyp2d10) from Rattus norvegicus (Rat).